Consider the following 380-residue polypeptide: Cytochrome b (380 aa).

4 helical membrane-spanning segments follow: residues phenylalanine 34–methionine 54, tryptophan 78–isoleucine 99, tryptophan 114–leucine 134, and leucine 179–threonine 199. 2 residues coordinate heme b: histidine 84 and histidine 98. Residues histidine 183 and histidine 197 each coordinate heme b. Histidine 202 provides a ligand contact to a ubiquinone. 4 helical membrane-spanning segments follow: residues isoleucine 227–alanine 247, leucine 289–histidine 309, leucine 321–serine 341, and phenylalanine 348–proline 368.

The protein belongs to the cytochrome b family. The cytochrome bc1 complex contains 11 subunits: 3 respiratory subunits (MT-CYB, CYC1 and UQCRFS1), 2 core proteins (UQCRC1 and UQCRC2) and 6 low-molecular weight proteins (UQCRH/QCR6, UQCRB/QCR7, UQCRQ/QCR8, UQCR10/QCR9, UQCR11/QCR10 and a cleavage product of UQCRFS1). This cytochrome bc1 complex then forms a dimer. Requires heme b as cofactor.

Its subcellular location is the mitochondrion inner membrane. In terms of biological role, component of the ubiquinol-cytochrome c reductase complex (complex III or cytochrome b-c1 complex) that is part of the mitochondrial respiratory chain. The b-c1 complex mediates electron transfer from ubiquinol to cytochrome c. Contributes to the generation of a proton gradient across the mitochondrial membrane that is then used for ATP synthesis. The protein is Cytochrome b (MT-CYB) of Aphelocoma coerulescens (Florida scrub-jay).